Reading from the N-terminus, the 315-residue chain is ATP synthase gamma chain (315 aa).

This sequence belongs to the ATPase gamma chain family. As to quaternary structure, F-type ATPases have 2 components, CF(1) - the catalytic core - and CF(0) - the membrane proton channel. CF(1) has five subunits: alpha(3), beta(3), gamma(1), delta(1), epsilon(1). CF(0) has three main subunits: a, b and c.

The protein localises to the cell membrane. Produces ATP from ADP in the presence of a proton gradient across the membrane. The gamma chain is believed to be important in regulating ATPase activity and the flow of protons through the CF(0) complex. The protein is ATP synthase gamma chain of Latilactobacillus sakei subsp. sakei (strain 23K) (Lactobacillus sakei subsp. sakei).